Reading from the N-terminus, the 354-residue chain is Guanine nucleotide-binding protein G(o) subunit alpha (354 aa).

A lipid anchor (N-myristoyl glycine) is attached at Gly2. Cys3 is lipidated: S-palmitoyl cysteine. In terms of domain architecture, G-alpha spans 32 to 354; sequence KDVKLLLLGA…ANNLRGCGLY (323 aa). The G1 motif stretch occupies residues 35–48; the sequence is KLLLLGAGESGKST. Positions 43, 46, 47, 48, 152, 176, 177, 178, and 179 each coordinate GTP. Ser47 provides a ligand contact to Mg(2+). The segment at 174–182 is G2 motif; the sequence is DILRTRVKT. Thr182 contacts Mg(2+). The tract at residues 197 to 206 is G3 motif; it reads FRLFDVGGQR. Gln205 is subject to 5-glutamyl histamine. A G4 motif region spans residues 266 to 273; that stretch reads ILFLNKKD. GTP-binding residues include Asn270, Asp273, and Cys325. Positions 324 to 329 are G5 motif; sequence TCATDT. Cys351 carries the S-palmitoyl cysteine lipid modification.

This sequence belongs to the G-alpha family. G(i/o/t/z) subfamily. In terms of assembly, g proteins are composed of 3 units; alpha, beta and gamma. The alpha chain contains the guanine nucleotide binding site. Forms a complex with GNB1 and GNG3. Interacts with RGS14. Interacts with RGS16. Interacts with RGS19. Interacts (when palmitoylated) with ADGRG3. Histaminylated at Gln-205 residues by TGM2.

Its subcellular location is the cell membrane. It localises to the membrane. It carries out the reaction GTP + H2O = GDP + phosphate + H(+). Its activity is regulated as follows. The GTPase activity is promoted by GTPAse activators, such as RGS14, RGS16 and RGS19. In terms of biological role, guanine nucleotide-binding proteins (G proteins) function as transducers downstream of G protein-coupled receptors (GPCRs) in numerous signaling cascades. The alpha chain contains the guanine nucleotide binding site and alternates between an active, GTP-bound state and an inactive, GDP-bound state. Signaling by an activated GPCR promotes GDP release and GTP binding. The alpha subunit has a low GTPase activity that converts bound GTP to GDP, thereby terminating the signal. Both GDP release and GTP hydrolysis are modulated by numerous regulatory proteins. Signaling is mediated via effector proteins, such as adenylate cyclase. Inhibits adenylate cyclase activity, leading to decreased intracellular cAMP levels. This is Guanine nucleotide-binding protein G(o) subunit alpha (Gnao1) from Mus musculus (Mouse).